The primary structure comprises 436 residues: MESLNQFVNSLAPKLSHWRRDFHHYAESGWVEFRTATLVAEELHQLGYSLALGREVVNESSRMGLPDEFTLQREFERARQQGALAQWIAAFEGGFTGIVATLDTGRPGPVMAFRVDMDALDLSEEQDVSHRPYRDGFASCNAGMMHACGHDGHTAIGLGLAHTLKQFESGLHGVIKLIFQPAEEGTRGARAMVDAGVVDDVDYFTAVHIGTGVPAGTVVCGSDNFMATTKFDAHFTGTAAHAGAKPEDGHNALLAAAQATLALHAIAPHSEGASRVNVGVMQAGSGRNVVPASALLKVETRGASDVINQYVFDRAQQAIQGAATMYGVGVETRLMGAATASSPSPQWVAWLQSQAAQVAGVNQAIERVEAPAGSEDATLMMARVQQHQGQASYVVFGTQLAAGHHNEKFDFDEQVLAIAVETLARTALNFPWTRGI.

The protein belongs to the peptidase M20 family. In terms of assembly, forms a heterodimer with AbgB. The cofactor is Mn(2+).

Functionally, component of the p-aminobenzoyl-glutamate hydrolase multicomponent enzyme system which catalyzes the cleavage of p-aminobenzoyl-glutamate (PABA-GLU) to form p-aminobenzoate (PABA) and glutamate. AbgAB does not degrade dipeptides and the physiological role of abgABT should be clarified. In Escherichia coli (strain K12), this protein is p-aminobenzoyl-glutamate hydrolase subunit A (abgA).